A 7311-amino-acid chain; its full sequence is MAM and LDL-receptor class A domain-containing protein 2 (7311 aa).

16 MAM domains span residues 4-171, 199-361, 363-530, 532-695, 727-887, 889-1050, 1052-1220, 1228-1392, 1394-1557, 1559-1722, 1755-1918, 1920-2087, 2089-2254, 2274-2437, 2439-2601, and 2603-2771; these read AYCD…SCVT, LDCD…FCSP, KQCT…VCPP, GDCN…NCPV, YDCT…QCPV, MQCS…ACPL, GDCT…RCRL, FDCN…SCPS, GMCS…SCPA, GDCS…NCIQ, NDCN…KCPS, TDCT…PCPL, GDCD…RCSV, NNCT…PCPP, TVCD…PCPP, and GSCD…YCVG. Residues 2461 to 2481 form a disordered region; the sequence is WKRDSGGTPSAGTGPSRDHTT. Low complexity predominate over residues 2466–2475; sequence GGTPSAGTGP. P-type domains are found at residues 2771–2817 and 2818–2862; these read GLCS…FYHP and SACA…FHGP. Cystine bridges form between C2773/C2802, C2784/C2801, C2795/C2813, C2820/C2847, C2831/C2846, and C2841/C2858. 4 consecutive MAM domains span residues 2883-3048, 3050-3214, 3216-3384, and 3429-3587; these read WDCT…TCPP, RECD…PCPP, GSCD…FCPS, and GACT…NCTL. Residues 3593-3628 form the LDL-receptor class A 1 domain; sequence SCGQQHRCIRGSCIDRGRVCDYTDDCGDNSDEQNCY. 3 disulfide bridges follow: C3594/C3605, C3600/C3618, and C3612/C3627. Residues 3632–3794 enclose the MAM 21 domain; sequence YRCSFEKSLC…DLSMTSSCQS (163 aa). 2 LDL-receptor class A domains span residues 3814 to 3850 and 4016 to 4054; these read PCPRFQFKCSNGLCIDTWNVCNYRDDCGDGSDEVNCG and SCISGEYRCTRGSCVLPSQLCDFSDDCGDMSDENPSTCA. Cystine bridges form between C3815/C3827, C3822/C3840, and C3834/C3849. One can recognise an MAM 22 domain in the interval 3850–4011; it reads GSCSFEPGLC…DDVTFQGCAL (162 aa). Disulfide bonds link C4017-C4029, C4024-C4042, and C4036-C4053. One can recognise an MAM 23 domain in the interval 4058–4221; it reads ERCNFEQDLC…DVSFTPNCRP (164 aa). Residues 4239-4276 form the LDL-receptor class A 4 domain; sequence GCQPGKFKCANGGNCISVSKVCNFYSDCSGGSDEMNCP. 3 disulfide bridges follow: C4240–C4253, C4247–C4266, and C4260–C4275. Residues 4277–4438 form the MAM 24 domain; sequence ATCNFQNSFC…DDVSFEHCAE (162 aa). The 40-residue stretch at 4444–4483 folds into the LDL-receptor class A 5 domain; the sequence is TCSGLSVFRCQSGHCIAMSGKCDFEPDCCDGSEETNIVCA. Cystine bridges form between C4445–C4458, C4453–C4471, and C4465–C4482. Residues 4486–4646 form the MAM 25 domain; the sequence is NRCNFEAGLC…DISFTPDCVV (161 aa). LDL-receptor class A domains follow at residues 4660–4699 and 4859–4899; these read PTQPSCFNCRDGSACVNISKTCDFHNDCTDKSDEDADLCG and YCSG…QSCS. 5 disulfides stabilise this stretch: C4668–C4687, C4681–C4698, C4860–C4876, C4871–C4889, and C4883–C4898. The region spanning 4700-4862 is the MAM 26 domain; it reads WPCDFQRGTC…NNYTLTYCSG (163 aa). An MAM 27 domain is found at 4903 to 5063; that stretch reads SRCTFENGLC…SIAMKPSCQQ (161 aa). Residues 5085–5122 form the LDL-receptor class A 8 domain; that stretch reads NCVLPQVPCVSDGKCVSPSQVCDFNLDCADASDERSCP. Intrachain disulfides connect C5086-C5099, C5093-C5112, and C5106-C5121. The region spanning 5123–5281 is the MAM 28 domain; the sequence is HMCTFESDQC…DDIKFVDCAL (159 aa). The region spanning 5287–5322 is the LDL-receptor class A 9 domain; that stretch reads SCPSQFTCARNSCVSNDYVCDFNDDCGDGSDETLCG. 3 disulfides stabilise this stretch: C5288–C5299, C5294–C5312, and C5306–C5321. An MAM 29 domain is found at 5326-5489; sequence TRCDFSRGSC…DVSFTTGCKQ (164 aa). The region spanning 5513-5552 is the LDL-receptor class A 10 domain; sequence QCTTAEFNCFNQGSGACIPSTQVCNFQPNCNDGVDEQNCA. Cystine bridges form between C5514/C5529, C5521/C5542, and C5536/C5551. The 166-residue stretch at 5554–5719 folds into the MAM 30 domain; the sequence is TKCSFDGGDF…DDIEFLNCVP (166 aa). One can recognise an LDL-receptor class A 11 domain in the interval 5725 to 5763; sequence KCTADEFQCARGGCIPKTSVCDFKADCMVGDVSDESSCS. Intrachain disulfides connect C5726–C5738, C5733–C5751, and C5745–C5762. An MAM 31 domain is found at 5768–5935; that stretch reads GQCDFEHGLC…LTPGCQICTD (168 aa). Residues 5957-5993 form the LDL-receptor class A 12 domain; the sequence is PCSLQQYVCKNLRCVDKAQICNFKDDCGDNSDELPCG. Disulfide bonds link C5958-C5970, C5965-C5983, and C5977-C5992. In terms of domain architecture, MAM 32 spans 5994 to 6156; it reads SNCTFEGDCY…DISFTDNCFV (163 aa). Residues 6014 to 6034 form a disordered region; that stretch reads NFHWRRRNGKTPSVGTGPTND. Residues 6023–6034 are compositionally biased toward polar residues; the sequence is KTPSVGTGPTND. In terms of domain architecture, LDL-receptor class A 13 spans 6161-6200; that stretch reads TCTPNEVKCRTSGHCVAEQRVCDHVKDCNDGTDEDALICS. Disulfide bonds link C6162-C6175, C6169-C6188, and C6182-C6199. One can recognise an MAM 33 domain in the interval 6204–6365; the sequence is ASCDFDVNWC…DISFSAGCYK (162 aa). Residues 6377–6414 form the LDL-receptor class A 14 domain; the sequence is RCSKVQFYCKADDLCINIHWKCDGEKDCTDGADEMLCP. Intrachain disulfides connect C6378/C6391, C6385/C6404, and C6398/C6413. MAM domains are found at residues 6430 to 6590, 6606 to 6779, 6808 to 6965, and 7173 to 7311; these read ANCN…NCAK, LDED…NCDF, GDCT…QCQF, and GSCN…YNNL.

Component of the acid-insoluble and acid-soluble organic matrix of the aragonitic skeleton (at protein level).

Its subcellular location is the secreted. This Acropora millepora (Staghorn coral) protein is MAM and LDL-receptor class A domain-containing protein 2.